Here is a 575-residue protein sequence, read N- to C-terminus: Carboxylesterase 5A (575 aa).

The first 28 residues, 1-28 (MSGDWVRPGQALIWVIWIFGAIIEGSVT), serve as a signal peptide directing secretion. C94 and C121 are oxidised to a cystine. N-linked (GlcNAc...) asparagine glycosylation is present at N134. Catalysis depends on S226, which acts as the Acyl-ester intermediate. An intrachain disulfide couples C280 to C291. N281 is a glycosylation site (N-linked (GlcNAc...) asparagine). Catalysis depends on E345, which acts as the Charge relay system. N363 carries N-linked (GlcNAc...) asparagine glycosylation. H454 serves as the catalytic Charge relay system. A glycan (N-linked (GlcNAc...) asparagine) is linked at N524.

The protein belongs to the type-B carboxylesterase/lipase family. Post-translationally, N-glycosylated.

It localises to the secreted. The catalysed reaction is a carboxylic ester + H2O = an alcohol + a carboxylate + H(+). Its function is as follows. Involved in the detoxification of xenobiotics and in the activation of ester and amide prodrugs. The polypeptide is Carboxylesterase 5A (Ces5a) (Mus musculus (Mouse)).